The primary structure comprises 465 residues: MAQAPVADIFAGKYSVGQQVTVKGWVRTRRDSKAGLSFVALHDGSCFDPIQVIALNTLNNYADIQRLTTSCSIIATGVLKESQGQGQSLEIEADEIEIVGWVENPDTYPMAPKRHSLEYLREHAHLRPRTNVIGAVTRVRNCLSQAIHRFFHENGYCWVSTPILTASDTEGAGEMFRVSTLDMMNVPTTEQGQVDFSQDFFGKETFLTVSGQLNGETYATAMSKIYTFGPTFRAENSNTSRHLAEFWMIEPEVAFADLSDIAQLSEDLLKYVFKAVLAERADDMAFFAQRINKDAITRLEKVIEQDFVRMDYTDAIEILQNCGKKFEFPVSWGVDLSSEHERYLAEEHVGAPIIMQNYPKDIKAFYMRINDDNKTVAAMDVLAPGIGEIIGGSQREERLDVFDRRLAEMGLDQEDYSWYRDLRRYGTVPHSGFGLGFERLVAYVTGMQNVRDVIAFPRTPGNANY.

The protein belongs to the class-II aminoacyl-tRNA synthetase family. As to quaternary structure, homodimer.

Its subcellular location is the cytoplasm. It carries out the reaction tRNA(Asn) + L-asparagine + ATP = L-asparaginyl-tRNA(Asn) + AMP + diphosphate + H(+). This is Asparagine--tRNA ligase from Pseudoalteromonas atlantica (strain T6c / ATCC BAA-1087).